Reading from the N-terminus, the 429-residue chain is S-adenosylmethionine synthase (429 aa).

Position 9 (glutamate 9) interacts with Mg(2+). Histidine 15 contacts ATP. Position 43 (glutamate 43) interacts with K(+). 2 residues coordinate L-methionine: glutamate 56 and glutamine 99. Residues 167–169 (DGK), 235–238 (SGRF), aspartate 246, 252–253 (RK), alanine 269, lysine 273, and lysine 277 each bind ATP. Residue aspartate 246 participates in L-methionine binding. An L-methionine-binding site is contributed by lysine 277.

This sequence belongs to the AdoMet synthase family. In terms of assembly, homotetramer. Mn(2+) serves as cofactor. Mg(2+) is required as a cofactor. The cofactor is Co(2+). It depends on K(+) as a cofactor.

The protein resides in the cytoplasm. The enzyme catalyses L-methionine + ATP + H2O = S-adenosyl-L-methionine + phosphate + diphosphate. It participates in amino-acid biosynthesis; S-adenosyl-L-methionine biosynthesis; S-adenosyl-L-methionine from L-methionine: step 1/1. Its function is as follows. Catalyzes the formation of S-adenosylmethionine from methionine and ATP. The reaction comprises two steps that are both catalyzed by the same enzyme: formation of S-adenosylmethionine (AdoMet) and triphosphate, and subsequent hydrolysis of the triphosphate. This Carica papaya (Papaya) protein is S-adenosylmethionine synthase (SAMS).